Consider the following 190-residue polypeptide: MSKEYEHLFKFVLAGDSGVGKTSILFRITDDTFTETHITIGIEFKIKTVYIEGKPIKLQIWDTAGEKRFRVHNSHYRGCHGVIIVYDVTDQRSFENVPSWIEDIRRYANENVIKIIIGNKNDLVSQKVVDPFLAQEFADSLDIPFKEISAKQSINIEEAFISLVKLCINRIEETSLKKTQSPEKNNCIIN.

Residue 15–22 (GDSGVGKT) participates in GTP binding. Residues 37–44 (HITIGIEF) carry the Effector region motif. Residues 62 to 66 (DTAGE) and 119 to 122 (NKND) each bind GTP. The residue at position 187 (cysteine 187) is a Cysteine methyl ester. Cysteine 187 carries the S-geranylgeranyl cysteine lipid modification. Residues 188-190 (IIN) constitute a propeptide, removed in mature form.

This sequence belongs to the small GTPase superfamily. Rab family.

The protein localises to the cell membrane. The sequence is that of Ras-related protein RabF1 (rabF1-1) from Dictyostelium discoideum (Social amoeba).